We begin with the raw amino-acid sequence, 955 residues long: Isoleucine--tRNA ligase (955 aa).

The short motif at 60 to 70 is the 'HIGH' region element; that stretch reads PYANGDLHIGH. E563 contacts L-isoleucyl-5'-AMP. The 'KMSKS' region signature appears at 604–608; sequence KMSKS. K607 is an ATP binding site. 4 residues coordinate Zn(2+): C926, C929, C946, and C949.

This sequence belongs to the class-I aminoacyl-tRNA synthetase family. IleS type 1 subfamily. In terms of assembly, monomer. It depends on Zn(2+) as a cofactor.

The protein resides in the cytoplasm. It carries out the reaction tRNA(Ile) + L-isoleucine + ATP = L-isoleucyl-tRNA(Ile) + AMP + diphosphate. Functionally, catalyzes the attachment of isoleucine to tRNA(Ile). As IleRS can inadvertently accommodate and process structurally similar amino acids such as valine, to avoid such errors it has two additional distinct tRNA(Ile)-dependent editing activities. One activity is designated as 'pretransfer' editing and involves the hydrolysis of activated Val-AMP. The other activity is designated 'posttransfer' editing and involves deacylation of mischarged Val-tRNA(Ile). The polypeptide is Isoleucine--tRNA ligase (Cyanothece sp. (strain PCC 7425 / ATCC 29141)).